A 529-amino-acid polypeptide reads, in one-letter code: CTP synthase (529 aa).

The interval 1–270 (MKYIVVTGGV…ADVVCSYLSL (270 aa)) is amidoligase domain. Residue Ser-12 coordinates CTP. Ser-12 is a UTP binding site. ATP is bound by residues 13–18 (GLGKGI) and Asp-70. Asp-70 and Glu-145 together coordinate Mg(2+). CTP is bound by residues 152–154 (DIE), 191–196 (KTKPTQ), and Lys-227. UTP contacts are provided by residues 191-196 (KTKPTQ) and Lys-227. 243-245 (KDA) contributes to the ATP binding site. One can recognise a Glutamine amidotransferase type-1 domain in the interval 293–525 (VAIVSKYGIE…VEACKKNKSS (233 aa)). Gly-349 provides a ligand contact to L-glutamine. The Nucleophile; for glutamine hydrolysis role is filled by Cys-376. Residues 377–380 (LGFQ), Glu-400, and Arg-455 each bind L-glutamine. Residues His-498 and Glu-500 contribute to the active site.

Belongs to the CTP synthase family. Homotetramer.

The enzyme catalyses UTP + L-glutamine + ATP + H2O = CTP + L-glutamate + ADP + phosphate + 2 H(+). It catalyses the reaction L-glutamine + H2O = L-glutamate + NH4(+). It carries out the reaction UTP + NH4(+) + ATP = CTP + ADP + phosphate + 2 H(+). It participates in pyrimidine metabolism; CTP biosynthesis via de novo pathway; CTP from UDP: step 2/2. With respect to regulation, allosterically activated by GTP, when glutamine is the substrate; GTP has no effect on the reaction when ammonia is the substrate. The allosteric effector GTP functions by stabilizing the protein conformation that binds the tetrahedral intermediate(s) formed during glutamine hydrolysis. Inhibited by the product CTP, via allosteric rather than competitive inhibition. Its function is as follows. Catalyzes the ATP-dependent amination of UTP to CTP with either L-glutamine or ammonia as the source of nitrogen. Regulates intracellular CTP levels through interactions with the four ribonucleotide triphosphates. This Methanoculleus marisnigri (strain ATCC 35101 / DSM 1498 / JR1) protein is CTP synthase.